The chain runs to 262 residues: GTP cyclohydrolase FolE2 (262 aa).

Belongs to the GTP cyclohydrolase IV family.

The catalysed reaction is GTP + H2O = 7,8-dihydroneopterin 3'-triphosphate + formate + H(+). Its pathway is cofactor biosynthesis; 7,8-dihydroneopterin triphosphate biosynthesis; 7,8-dihydroneopterin triphosphate from GTP: step 1/1. Functionally, converts GTP to 7,8-dihydroneopterin triphosphate. This chain is GTP cyclohydrolase FolE2, found in Dichelobacter nodosus (strain VCS1703A).